The primary structure comprises 131 residues: MSEIPADLSYTTEHEWVQRTGDGTVRVGITDYAQSALGDVVFVQLPDVGSDVTAGESFGEVESTKSVSDLYAPVTAKVIAVNGDLEGNPQLVNSDPYGEGWLVELQTETESMQAGLASLLDAEGYRAHVAD.

Residues 24–106 form the Lipoyl-binding domain; that stretch reads TVRVGITDYA…YGEGWLVELQ (83 aa). K65 is modified (N6-lipoyllysine).

This sequence belongs to the GcvH family. In terms of assembly, the glycine cleavage system is composed of four proteins: P, T, L and H. The cofactor is (R)-lipoate.

Functionally, the glycine cleavage system catalyzes the degradation of glycine. The H protein shuttles the methylamine group of glycine from the P protein to the T protein. The protein is Glycine cleavage system H protein of Mycolicibacterium vanbaalenii (strain DSM 7251 / JCM 13017 / BCRC 16820 / KCTC 9966 / NRRL B-24157 / PYR-1) (Mycobacterium vanbaalenii).